We begin with the raw amino-acid sequence, 248 residues long: Small ribosomal subunit protein uS3 (248 aa).

Residues I39–P108 enclose the KH type-2 domain. A disordered region spans residues K212–E248. The segment covering R221 to P234 has biased composition (basic and acidic residues). Positions S235 to E248 are enriched in basic residues.

This sequence belongs to the universal ribosomal protein uS3 family. In terms of assembly, part of the 30S ribosomal subunit. Forms a tight complex with proteins S10 and S14.

In terms of biological role, binds the lower part of the 30S subunit head. Binds mRNA in the 70S ribosome, positioning it for translation. This is Small ribosomal subunit protein uS3 from Deinococcus geothermalis (strain DSM 11300 / CIP 105573 / AG-3a).